Reading from the N-terminus, the 410-residue chain is Elongation factor Tu, apicoplast (410 aa).

The 205-residue stretch at Lys-10 to Thr-214 folds into the tr-type G domain. The tract at residues Gly-19–Thr-26 is G1. Gly-19 to Thr-26 contributes to the GTP binding site. Thr-26 contacts Mg(2+). Residues Gly-60–Asn-64 are G2. Residues Asp-81–Gly-84 form a G3 region. Residues Asp-81–His-85 and Asn-136–Asp-139 each bind GTP. The interval Asn-136–Asp-139 is G4. The tract at residues Ser-174–Leu-176 is G5.

This sequence belongs to the TRAFAC class translation factor GTPase superfamily. Classic translation factor GTPase family. EF-Tu/EF-1A subfamily.

The protein localises to the plastid. It localises to the apicoplast. It catalyses the reaction GTP + H2O = GDP + phosphate + H(+). Its function is as follows. GTP hydrolase that promotes the GTP-dependent binding of aminoacyl-tRNA to the A-site of ribosomes during protein biosynthesis. This Plasmodium falciparum (isolate 3D7) protein is Elongation factor Tu, apicoplast (tufA).